Consider the following 215-residue polypeptide: 7-methyl-GTP pyrophosphatase (215 aa).

D79 (proton acceptor) is an active-site residue.

Belongs to the Maf family. YceF subfamily. The cofactor is a divalent metal cation.

It is found in the cytoplasm. The enzyme catalyses N(7)-methyl-GTP + H2O = N(7)-methyl-GMP + diphosphate + H(+). Nucleoside triphosphate pyrophosphatase that hydrolyzes 7-methyl-GTP (m(7)GTP). May have a dual role in cell division arrest and in preventing the incorporation of modified nucleotides into cellular nucleic acids. This Burkholderia mallei (strain ATCC 23344) protein is 7-methyl-GTP pyrophosphatase.